A 436-amino-acid polypeptide reads, in one-letter code: Glutamyl-tRNA reductase (436 aa).

Substrate contacts are provided by residues 49-52 (TCNR), serine 109, 114-116 (EGQ), and glutamine 120. Cysteine 50 acts as the Nucleophile in catalysis. 198 to 203 (GAGRMS) is an NADP(+) binding site.

Belongs to the glutamyl-tRNA reductase family. In terms of assembly, homodimer.

It carries out the reaction (S)-4-amino-5-oxopentanoate + tRNA(Glu) + NADP(+) = L-glutamyl-tRNA(Glu) + NADPH + H(+). It participates in porphyrin-containing compound metabolism; protoporphyrin-IX biosynthesis; 5-aminolevulinate from L-glutamyl-tRNA(Glu): step 1/2. The protein operates within porphyrin-containing compound metabolism; chlorophyll biosynthesis. Its function is as follows. Catalyzes the NADPH-dependent reduction of glutamyl-tRNA(Glu) to glutamate 1-semialdehyde (GSA). In Prochlorococcus marinus (strain MIT 9313), this protein is Glutamyl-tRNA reductase.